A 118-amino-acid chain; its full sequence is UPF0295 protein BCG9842_B4782 (118 aa).

2 consecutive transmembrane segments (helical) span residues 12–32 (IRTF…LGVF) and 43–63 (FMMV…WIGM).

The protein belongs to the UPF0295 family.

It is found in the cell membrane. The polypeptide is UPF0295 protein BCG9842_B4782 (Bacillus cereus (strain G9842)).